A 500-amino-acid chain; its full sequence is NAD(P)H-quinone oxidoreductase chain 4, chloroplastic (500 aa).

14 helical membrane-spanning segments follow: residues 4–24 (FPWL…IFFL), 37–57 (IGIC…FFQL), 87–107 (IGPI…AWPV), 113–130 (LFHF…GLFS), 134–154 (LLLF…LLSM), 167–187 (FILY…GMGL), 208–228 (ALEI…LPII), 242–262 (HYST…YGLI), 272–292 (AHSI…IYAA), 305–325 (IAYS…SITD), 330–350 (GAVL…FLAG), 386–406 (LALP…GIIT), 416–436 (VLIT…SLSM), and 462–482 (LFIS…PDFV).

The protein belongs to the complex I subunit 4 family.

Its subcellular location is the plastid. It is found in the chloroplast thylakoid membrane. It catalyses the reaction a plastoquinone + NADH + (n+1) H(+)(in) = a plastoquinol + NAD(+) + n H(+)(out). The catalysed reaction is a plastoquinone + NADPH + (n+1) H(+)(in) = a plastoquinol + NADP(+) + n H(+)(out). The sequence is that of NAD(P)H-quinone oxidoreductase chain 4, chloroplastic from Ceratophyllum demersum (Rigid hornwort).